The following is a 130-amino-acid chain: uncharacterized protein (130 aa).

The N-terminal stretch at Met-1–Ala-20 is a signal peptide.

This is an uncharacterized protein from Saccharomyces cerevisiae (strain ATCC 204508 / S288c) (Baker's yeast).